The primary structure comprises 380 residues: Cytochrome b (380 aa).

4 helical membrane passes run 34 to 54, 78 to 99, 114 to 134, and 179 to 199; these read FGSL…FLAM, WLIR…YLHI, WNIG…GYVL, and FFTF…VHLL. Residues His-84 and His-98 each coordinate heme b. The heme b site is built by His-183 and His-197. Residue His-202 participates in a ubiquinone binding. Helical transmembrane passes span 227–247, 289–309, 321–341, and 348–368; these read YKDL…ALFT, LGGV…PILH, ISQL…WIGG, and FITI…ILFP.

The protein belongs to the cytochrome b family. In terms of assembly, the cytochrome bc1 complex contains 3 respiratory subunits (MT-CYB, CYC1 and UQCRFS1), 2 core proteins (UQCRC1 and UQCRC2) and probably 6 low-molecular weight proteins. It depends on heme b as a cofactor.

It localises to the mitochondrion inner membrane. Functionally, component of the ubiquinol-cytochrome c reductase complex (complex III or cytochrome b-c1 complex) that is part of the mitochondrial respiratory chain. The b-c1 complex mediates electron transfer from ubiquinol to cytochrome c. Contributes to the generation of a proton gradient across the mitochondrial membrane that is then used for ATP synthesis. This is Cytochrome b (mt-cyb) from Pastinachus sephen (Cowtail stingray).